Consider the following 389-residue polypeptide: S-adenosylmethionine synthase (389 aa).

ATP is bound at residue H17. D19 contacts Mg(2+). E45 provides a ligand contact to K(+). Residues E58 and Q101 each contribute to the L-methionine site. A flexible loop region spans residues 101–111; it reads QSPDIAQGVTE. Residues 168 to 170, 234 to 235, D243, 249 to 250, A266, and K270 each bind ATP; these read DSK, RF, and RK. An L-methionine-binding site is contributed by D243. K274 serves as a coordination point for L-methionine.

It belongs to the AdoMet synthase family. In terms of assembly, homotetramer; dimer of dimers. Mg(2+) is required as a cofactor. It depends on K(+) as a cofactor.

It localises to the cytoplasm. The catalysed reaction is L-methionine + ATP + H2O = S-adenosyl-L-methionine + phosphate + diphosphate. It participates in amino-acid biosynthesis; S-adenosyl-L-methionine biosynthesis; S-adenosyl-L-methionine from L-methionine: step 1/1. Functionally, catalyzes the formation of S-adenosylmethionine (AdoMet) from methionine and ATP. The overall synthetic reaction is composed of two sequential steps, AdoMet formation and the subsequent tripolyphosphate hydrolysis which occurs prior to release of AdoMet from the enzyme. The sequence is that of S-adenosylmethionine synthase from Geobacter sp. (strain M21).